We begin with the raw amino-acid sequence, 310 residues long: Taste receptor type 2 member 125 (310 aa).

The Extracellular segment spans residues 1–2 (MG). A helical transmembrane segment spans residues 3-23 (IVIGIICAFIIIVQFIIGNVA). Over 24 to 46 (NGFIALVNIIDWVKRRKISLVDQ) the chain is Cytoplasmic. A helical membrane pass occupies residues 47 to 67 (IITALAISRIDMLCSTFLIVL). The Extracellular segment spans residues 68–87 (ITSLYPDLNTAVNMVKISNN). A helical membrane pass occupies residues 88 to 108 (IWIVANHFSIWLATSLSIFYF). At 109–128 (LKIANFSNYVFLCLRWRLSK) the chain is on the cytoplasmic side. The helical transmembrane segment at 129–149 (VVSVTLLLSLVLLLMNILIMN) threads the bilayer. Topologically, residues 150 to 185 (MHIDTWSDGFKRNVSFGFRSKNCTRFFKLALLINTT) are extracellular. Residues Asn-162, Asn-171, and Asn-183 are each glycosylated (N-linked (GlcNAc...) asparagine). Residues 186-206 (FTCVPFTVSMVAFLLLIFSLW) traverse the membrane as a helical segment. At 207–232 (RHLKNMQYHAKGSRDPSTAVHIKALQ) the chain is on the cytoplasmic side. A helical transmembrane segment spans residues 233-253 (MVVVFVLFYTFFFLSLAIQLW). Over 254–261 (TSESLEKN) the chain is Extracellular. Residues 262 to 282 (NLFYVTLIITFPSVHSCMLIL) form a helical membrane-spanning segment. Topologically, residues 283 to 310 (RNSKLRQASLLVLWWLLCRSKDIQTLVP) are cytoplasmic.

This sequence belongs to the G-protein coupled receptor T2R family.

It is found in the membrane. Functionally, putative taste receptor which may play a role in the perception of bitterness. In Rattus norvegicus (Rat), this protein is Taste receptor type 2 member 125.